An 86-amino-acid polypeptide reads, in one-letter code: NADH-ubiquinone oxidoreductase chain 4L (86 aa).

2 helical membrane-spanning segments follow: residues 22-42 and 52-72; these read LLVTLLSFEFLILLLFSLLVY and FIFLSVTVCEGALGLSVLVSL.

Belongs to the complex I subunit 4L family.

Its subcellular location is the mitochondrion membrane. It catalyses the reaction a ubiquinone + NADH + 5 H(+)(in) = a ubiquinol + NAD(+) + 4 H(+)(out). Functionally, core subunit of the mitochondrial membrane respiratory chain NADH dehydrogenase (Complex I) that is believed to belong to the minimal assembly required for catalysis. Complex I functions in the transfer of electrons from NADH to the respiratory chain. The immediate electron acceptor for the enzyme is believed to be ubiquinone. The polypeptide is NADH-ubiquinone oxidoreductase chain 4L (ND4L) (Artemia salina (Brine shrimp)).